The primary structure comprises 359 residues: MPNPSSTSSPYPLPEEIRNLLADVETFVADILKGENLSKKAKEKRESLIKKIKDVKSIYLQEFQDKGDAEDGEEYDDPFAGPPDTISLASERYDKDDEAPSDGAQFPPIAAQDLPFVLKAGYLEKRRKDHSFLGFEWQKRWCALSKTVFYYYGSDKDKQQKGEFAIDGYSVRMNNTLRKDGKKDCCFEISAPDKRIYQFTAASPKDAEEWVQQLKFVLQDMESDIIPEDYDERGELYDDVDHPLPISNPLTSSQPIDDEIYEELPEEEEDSAPVKVEEQRKMSQDSVHHTSGDKSTDYANFYQGLWDCTGAFSDELSFKRGDVIYILSKEYNRYGWWVGEMKGAIGLVPKAYIMEMYDI.

A phosphoserine mark is found at S5, S6, and S9. A homodimerization region spans residues 14 to 64 (PEEIRNLLADVETFVADILKGENLSKKAKEKRESLIKKIKDVKSIYLQEFQ). The segment at 66 to 88 (KGDAEDGEEYDDPFAGPPDTISL) is disordered. The residue at position 75 (Y75) is a Phosphotyrosine. Phosphoserine occurs at positions 87 and 90. A PH domain is found at 116–219 (FVLKAGYLEK…WVQQLKFVLQ (104 aa)). Residues Y151 and Y197 each carry the phosphotyrosine modification. Residue S223 is modified to Phosphoserine. The residue at position 261 (Y261) is a Phosphotyrosine. The segment at 264 to 293 (LPEEEEDSAPVKVEEQRKMSQDSVHHTSGD) is disordered. The span at 275–293 (KVEEQRKMSQDSVHHTSGD) shows a compositional bias: basic and acidic residues. Residues S283 and S286 each carry the phosphoserine modification. Residues 297–358 (DYANFYQGLW…PKAYIMEMYD (62 aa)) form the SH3 domain.

The protein belongs to the SKAP family. Homodimer. Interacts with PTPNS1. Part of a complex consisting of SKAP2, FYB1 and PTPNS1. Part of a complex consisting of SKAP2, FYB1 and LILRB3. May interact with actin. Interacts with FYB1, which is required for SKAP2 protein stability. Interacts with LAT, GRB2, PTK2B and PRAM1. May interact with FYN, HCK and LYN. Interacts with FASLG. Phosphorylated in resting platelets. Phosphorylated by FYN on Tyr-261 upon T-cell activation. Dephosphorylated on Tyr-75 by PTPN22. In terms of tissue distribution, ubiquitously expressed. Present in platelets (at protein level).

It is found in the cytoplasm. Functionally, may be involved in B-cell and macrophage adhesion processes. In B-cells, may act by coupling the B-cell receptor (BCR) to integrin activation. May play a role in src signaling pathway. This chain is Src kinase-associated phosphoprotein 2 (SKAP2), found in Homo sapiens (Human).